The chain runs to 621 residues: uncharacterized protein (621 aa).

An N-terminal signal peptide occupies residues 1–15 (MRRSVCYVTPSVARA).

The protein belongs to the chlamydial CPn_0512/CT_425/TC_0708 family.

This is an uncharacterized protein from Chlamydia trachomatis serovar D (strain ATCC VR-885 / DSM 19411 / UW-3/Cx).